We begin with the raw amino-acid sequence, 334 residues long: Leucine-rich repeat-containing protein 39 (334 aa).

LRR repeat units follow at residues 59 to 82 (EDGR…LLKL), 83 to 105 (NQLQ…IGRF), 106 to 128 (QHLI…IGLL), 129 to 151 (TRLQ…LSNC), 153 to 175 (SLEK…LSKL), 176 to 198 (LKLT…VLDM), 199 to 221 (PALE…LDRM), 223 to 244 (SLHT…IRNM), 245 to 269 (KNLG…EMTS), and 272 to 295 (FVNF…VDGE).

Interacts with MYH7 (via C-terminus). Expressed in heart and skeletal muscle (at protein level). Also detected in kidney (at protein level). Not detected in other tissues tested (at protein level).

The protein localises to the cytoplasm. It is found in the myofibril. It localises to the sarcomere. Its subcellular location is the m line. Component of the sarcomeric M-band which plays a role in myocyte response to biomechanical stress. May regulate expression of other M-band proteins via an SRF-dependent pathway. Important for normal contractile function in heart. This chain is Leucine-rich repeat-containing protein 39, found in Rattus norvegicus (Rat).